A 159-amino-acid chain; its full sequence is uncharacterized protein (159 aa).

An N-acetyltransferase domain is found at 7–151 (LLINYKTLEE…NPLIWEPAHI (145 aa)).

This is an uncharacterized protein from Bacillus pumilus (strain SAFR-032).